The following is a 158-amino-acid chain: ATP synthase subunit b', chloroplastic (158 aa).

The chain crosses the membrane as a helical span at residues 25 to 45; it reads ATLPLMALQFIILTTILNFIF.

Belongs to the ATPase B chain family. As to quaternary structure, F-type ATPases have 2 components, F(1) - the catalytic core - and F(0) - the membrane proton channel. F(1) has five subunits: alpha(3), beta(3), gamma(1), delta(1), epsilon(1). F(0) has four main subunits: a(1), b(1), b'(1) and c(10-14). The alpha and beta chains form an alternating ring which encloses part of the gamma chain. F(1) is attached to F(0) by a central stalk formed by the gamma and epsilon chains, while a peripheral stalk is formed by the delta, b and b' chains.

The protein localises to the plastid. Its subcellular location is the chloroplast thylakoid membrane. Its function is as follows. F(1)F(0) ATP synthase produces ATP from ADP in the presence of a proton or sodium gradient. F-type ATPases consist of two structural domains, F(1) containing the extramembraneous catalytic core and F(0) containing the membrane proton channel, linked together by a central stalk and a peripheral stalk. During catalysis, ATP synthesis in the catalytic domain of F(1) is coupled via a rotary mechanism of the central stalk subunits to proton translocation. Component of the F(0) channel, it forms part of the peripheral stalk, linking F(1) to F(0). The b'-subunit is a diverged and duplicated form of b found in plants and photosynthetic bacteria. In Gracilaria tenuistipitata var. liui (Red alga), this protein is ATP synthase subunit b', chloroplastic.